The primary structure comprises 245 residues: tRNA (guanine-N(1)-)-methyltransferase (245 aa).

Residues Gly-114 and 134 to 139 contribute to the S-adenosyl-L-methionine site; that span reads IGDYIL.

This sequence belongs to the RNA methyltransferase TrmD family. In terms of assembly, homodimer.

The protein localises to the cytoplasm. The enzyme catalyses guanosine(37) in tRNA + S-adenosyl-L-methionine = N(1)-methylguanosine(37) in tRNA + S-adenosyl-L-homocysteine + H(+). Its function is as follows. Specifically methylates guanosine-37 in various tRNAs. This Listeria monocytogenes serotype 4b (strain CLIP80459) protein is tRNA (guanine-N(1)-)-methyltransferase.